We begin with the raw amino-acid sequence, 189 residues long: Probable thymidylate kinase 1 (189 aa).

Residue 9-16 (GIDGSGKT) participates in ATP binding.

This sequence belongs to the thymidylate kinase family.

The catalysed reaction is dTMP + ATP = dTDP + ADP. This Saccharolobus solfataricus (strain ATCC 35092 / DSM 1617 / JCM 11322 / P2) (Sulfolobus solfataricus) protein is Probable thymidylate kinase 1 (tmk1).